Reading from the N-terminus, the 98-residue chain is Beta-elicitin DRE-beta (98 aa).

3 disulfide bridges follow: Cys3/Cys71, Cys27/Cys56, and Cys51/Cys95.

The protein belongs to the elicitin family.

The protein resides in the secreted. In terms of biological role, induces local and distal defense responses (incompatible hypersensitive reaction) in plants from the solanaceae and cruciferae families. Elicits leaf necrosis and causes the accumulation of pathogenesis-related proteins. Might interact with the lipidic molecules of the plasma membrane. This is Beta-elicitin DRE-beta from Phytophthora drechsleri.